Here is a 152-residue protein sequence, read N- to C-terminus: D-aminoacyl-tRNA deacylase (152 aa).

Positions 142–143 (GP) match the Gly-cisPro motif, important for rejection of L-amino acids motif.

It belongs to the DTD family. As to quaternary structure, homodimer.

It localises to the cytoplasm. The enzyme catalyses glycyl-tRNA(Ala) + H2O = tRNA(Ala) + glycine + H(+). It carries out the reaction a D-aminoacyl-tRNA + H2O = a tRNA + a D-alpha-amino acid + H(+). An aminoacyl-tRNA editing enzyme that deacylates mischarged D-aminoacyl-tRNAs. Also deacylates mischarged glycyl-tRNA(Ala), protecting cells against glycine mischarging by AlaRS. Acts via tRNA-based rather than protein-based catalysis; rejects L-amino acids rather than detecting D-amino acids in the active site. By recycling D-aminoacyl-tRNA to D-amino acids and free tRNA molecules, this enzyme counteracts the toxicity associated with the formation of D-aminoacyl-tRNA entities in vivo and helps enforce protein L-homochirality. The sequence is that of D-aminoacyl-tRNA deacylase from Paraburkholderia xenovorans (strain LB400).